The following is a 253-amino-acid chain: Ubiquinone/menaquinone biosynthesis C-methyltransferase UbiE (253 aa).

S-adenosyl-L-methionine-binding positions include Thr76, Asp97, and 125–126 (NA).

Belongs to the class I-like SAM-binding methyltransferase superfamily. MenG/UbiE family.

It carries out the reaction a 2-demethylmenaquinol + S-adenosyl-L-methionine = a menaquinol + S-adenosyl-L-homocysteine + H(+). The enzyme catalyses a 2-methoxy-6-(all-trans-polyprenyl)benzene-1,4-diol + S-adenosyl-L-methionine = a 5-methoxy-2-methyl-3-(all-trans-polyprenyl)benzene-1,4-diol + S-adenosyl-L-homocysteine + H(+). It functions in the pathway quinol/quinone metabolism; menaquinone biosynthesis; menaquinol from 1,4-dihydroxy-2-naphthoate: step 2/2. Its pathway is cofactor biosynthesis; ubiquinone biosynthesis. In terms of biological role, methyltransferase required for the conversion of demethylmenaquinol (DMKH2) to menaquinol (MKH2) and the conversion of 2-polyprenyl-6-methoxy-1,4-benzoquinol (DDMQH2) to 2-polyprenyl-3-methyl-6-methoxy-1,4-benzoquinol (DMQH2). The sequence is that of Ubiquinone/menaquinone biosynthesis C-methyltransferase UbiE from Bradyrhizobium sp. (strain BTAi1 / ATCC BAA-1182).